Here is a 233-residue protein sequence, read N- to C-terminus: Probable septum site-determining protein MinC (233 aa).

Residues 98–123 (LTEGKEKAPRPAPSEPTPPPPPVANQ) are disordered. Residues 107-120 (RPAPSEPTPPPPPV) are compositionally biased toward pro residues.

This sequence belongs to the MinC family. As to quaternary structure, interacts with MinD and FtsZ.

In terms of biological role, cell division inhibitor that blocks the formation of polar Z ring septums. Rapidly oscillates between the poles of the cell to destabilize FtsZ filaments that have formed before they mature into polar Z rings. Prevents FtsZ polymerization. The sequence is that of Probable septum site-determining protein MinC from Klebsiella pneumoniae (strain 342).